Reading from the N-terminus, the 61-residue chain is Small ribosomal subunit protein uS14 (61 aa).

Residues Cys-24, Cys-27, Cys-40, and Cys-43 each coordinate Zn(2+).

Belongs to the universal ribosomal protein uS14 family. Zinc-binding uS14 subfamily. In terms of assembly, part of the 30S ribosomal subunit. Contacts proteins S3 and S10. Zn(2+) is required as a cofactor.

Binds 16S rRNA, required for the assembly of 30S particles and may also be responsible for determining the conformation of the 16S rRNA at the A site. This is Small ribosomal subunit protein uS14 from Helicobacter pylori (strain G27).